Here is a 130-residue protein sequence, read N- to C-terminus: Small ribosomal subunit protein uS9 (130 aa).

The segment at 109-130 (RVKERKKYGQKGARAKFQFSKR) is disordered.

This sequence belongs to the universal ribosomal protein uS9 family.

This Desulfotalea psychrophila (strain LSv54 / DSM 12343) protein is Small ribosomal subunit protein uS9.